The primary structure comprises 289 residues: Protoheme IX farnesyltransferase 2 (289 aa).

The next 9 membrane-spanning stretches (helical) occupy residues 4–24, 28–48, 66–86, 99–118, 124–144, 155–175, 199–219, 221–241, and 256–276; these read PGII…AAKG, LVLM…GCAI, RVTV…LALG, ALAL…VYSL, SVYG…VGYC, AILL…IAIF, LHIV…PLAG, TGIA…AMAL, and QVFG…ALDF.

Belongs to the UbiA prenyltransferase family. Protoheme IX farnesyltransferase subfamily.

It is found in the cell inner membrane. The enzyme catalyses heme b + (2E,6E)-farnesyl diphosphate + H2O = Fe(II)-heme o + diphosphate. It functions in the pathway porphyrin-containing compound metabolism; heme O biosynthesis; heme O from protoheme: step 1/1. In terms of biological role, converts heme B (protoheme IX) to heme O by substitution of the vinyl group on carbon 2 of heme B porphyrin ring with a hydroxyethyl farnesyl side group. This chain is Protoheme IX farnesyltransferase 2, found in Shewanella baltica (strain OS195).